A 222-amino-acid chain; its full sequence is uncharacterized protein (222 aa).

This is an uncharacterized protein from Klebsiella pneumoniae.